The sequence spans 545 residues: 2-succinyl-5-enolpyruvyl-6-hydroxy-3-cyclohexene-1-carboxylate synthase (545 aa).

The segment at 184 to 209 (PLVPDPEPHGAPTPAGRPGGRPWTYT) is disordered. Over residues 195–205 (PTPAGRPGGRP) the composition is skewed to low complexity.

The protein belongs to the TPP enzyme family. MenD subfamily. In terms of assembly, homodimer. The cofactor is Mg(2+). Requires Mn(2+) as cofactor. Thiamine diphosphate serves as cofactor.

It carries out the reaction isochorismate + 2-oxoglutarate + H(+) = 5-enolpyruvoyl-6-hydroxy-2-succinyl-cyclohex-3-ene-1-carboxylate + CO2. The protein operates within quinol/quinone metabolism; 1,4-dihydroxy-2-naphthoate biosynthesis; 1,4-dihydroxy-2-naphthoate from chorismate: step 2/7. It functions in the pathway quinol/quinone metabolism; menaquinone biosynthesis. Its function is as follows. Catalyzes the thiamine diphosphate-dependent decarboxylation of 2-oxoglutarate and the subsequent addition of the resulting succinic semialdehyde-thiamine pyrophosphate anion to isochorismate to yield 2-succinyl-5-enolpyruvyl-6-hydroxy-3-cyclohexene-1-carboxylate (SEPHCHC). This Mycobacterium avium (strain 104) protein is 2-succinyl-5-enolpyruvyl-6-hydroxy-3-cyclohexene-1-carboxylate synthase.